A 129-amino-acid chain; its full sequence is Cytochrome c' (129 aa).

Residues Arg12, Gln13, Thr69, Glu70, Cys119, Cys122, and His123 each contribute to the heme c site.

In terms of processing, binds 1 heme c group covalently per subunit.

Cytochrome c' is the most widely occurring bacterial c-type cytochrome. Cytochromes c' are high-spin proteins and the heme has no sixth ligand. Their exact function is not known. This chain is Cytochrome c', found in Rubrivivax gelatinosus (Rhodocyclus gelatinosus).